We begin with the raw amino-acid sequence, 1078 residues long: DNA gyrase subunit B (1078 aa).

Residues 889–974 (GKILNIEKTD…QGYIYIACPP (86 aa)) form the Toprim domain. Positions 895, 939, and 941 each coordinate Mg(2+).

This sequence belongs to the type II topoisomerase GyrB family. In terms of assembly, heterotetramer, composed of two GyrA and two GyrB chains. In the heterotetramer, GyrA contains the active site tyrosine that forms a transient covalent intermediate with DNA, while GyrB binds cofactors and catalyzes ATP hydrolysis. Mg(2+) is required as a cofactor. In terms of processing, this protein undergoes a protein self splicing that involves a post-translational excision of the intervening region (intein) followed by peptide ligation.

It localises to the cytoplasm. It catalyses the reaction ATP-dependent breakage, passage and rejoining of double-stranded DNA.. Functionally, a type II topoisomerase that negatively supercoils closed circular double-stranded (ds) DNA in an ATP-dependent manner to modulate DNA topology and maintain chromosomes in an underwound state. Negative supercoiling favors strand separation, and DNA replication, transcription, recombination and repair, all of which involve strand separation. Also able to catalyze the interconversion of other topological isomers of dsDNA rings, including catenanes and knotted rings. Type II topoisomerases break and join 2 DNA strands simultaneously in an ATP-dependent manner. This is DNA gyrase subunit B (gyrB) from Synechocystis sp. (strain ATCC 27184 / PCC 6803 / Kazusa).